Consider the following 73-residue polypeptide: Large ribosomal subunit protein bL31 (73 aa).

Zn(2+) contacts are provided by C16, C18, C36, and C39.

It belongs to the bacterial ribosomal protein bL31 family. Type A subfamily. As to quaternary structure, part of the 50S ribosomal subunit. It depends on Zn(2+) as a cofactor.

In terms of biological role, binds the 23S rRNA. The polypeptide is Large ribosomal subunit protein bL31 (Desulfotalea psychrophila (strain LSv54 / DSM 12343)).